The following is a 585-amino-acid chain: Proline--tRNA ligase (585 aa).

The protein belongs to the class-II aminoacyl-tRNA synthetase family. ProS type 1 subfamily. Homodimer.

The protein resides in the cytoplasm. The enzyme catalyses tRNA(Pro) + L-proline + ATP = L-prolyl-tRNA(Pro) + AMP + diphosphate. Functionally, catalyzes the attachment of proline to tRNA(Pro) in a two-step reaction: proline is first activated by ATP to form Pro-AMP and then transferred to the acceptor end of tRNA(Pro). As ProRS can inadvertently accommodate and process non-cognate amino acids such as alanine and cysteine, to avoid such errors it has two additional distinct editing activities against alanine. One activity is designated as 'pretransfer' editing and involves the tRNA(Pro)-independent hydrolysis of activated Ala-AMP. The other activity is designated 'posttransfer' editing and involves deacylation of mischarged Ala-tRNA(Pro). The misacylated Cys-tRNA(Pro) is not edited by ProRS. This chain is Proline--tRNA ligase, found in Mycolicibacterium vanbaalenii (strain DSM 7251 / JCM 13017 / BCRC 16820 / KCTC 9966 / NRRL B-24157 / PYR-1) (Mycobacterium vanbaalenii).